The primary structure comprises 76 residues: Acyl carrier protein (76 aa).

The Carrier domain occupies 1–75 (MIFEKIKDLI…DIVFYITKNT (75 aa)). At Ser-35 the chain carries O-(pantetheine 4'-phosphoryl)serine.

The protein belongs to the acyl carrier protein (ACP) family. 4'-phosphopantetheine is transferred from CoA to a specific serine of apo-ACP by AcpS. This modification is essential for activity because fatty acids are bound in thioester linkage to the sulfhydryl of the prosthetic group.

The protein resides in the cytoplasm. Its pathway is lipid metabolism; fatty acid biosynthesis. In terms of biological role, carrier of the growing fatty acid chain in fatty acid biosynthesis. In Aster yellows witches'-broom phytoplasma (strain AYWB), this protein is Acyl carrier protein.